Here is a 464-residue protein sequence, read N- to C-terminus: Soluble pyridine nucleotide transhydrogenase (464 aa).

Residue 35–44 participates in FAD binding; sequence DDRRQVGGNC.

It belongs to the class-I pyridine nucleotide-disulfide oxidoreductase family. Requires FAD as cofactor.

Its subcellular location is the cytoplasm. It carries out the reaction NAD(+) + NADPH = NADH + NADP(+). Functionally, conversion of NADPH, generated by peripheral catabolic pathways, to NADH, which can enter the respiratory chain for energy generation. The polypeptide is Soluble pyridine nucleotide transhydrogenase (Pseudomonas putida (strain ATCC 47054 / DSM 6125 / CFBP 8728 / NCIMB 11950 / KT2440)).